The primary structure comprises 463 residues: L-seryl-tRNA(Sec) selenium transferase (463 aa).

N6-(pyridoxal phosphate)lysine is present on lysine 295.

This sequence belongs to the SelA family. In terms of assembly, homodecamer; pentamer of dimers. Binds only one seryl-tRNA(Sec) per dimer. Pyridoxal 5'-phosphate serves as cofactor.

Its subcellular location is the cytoplasm. It catalyses the reaction L-seryl-tRNA(Sec) + selenophosphate + H(+) = L-selenocysteinyl-tRNA(Sec) + phosphate. It functions in the pathway aminoacyl-tRNA biosynthesis; selenocysteinyl-tRNA(Sec) biosynthesis; selenocysteinyl-tRNA(Sec) from L-seryl-tRNA(Sec) (bacterial route): step 1/1. Its function is as follows. Converts seryl-tRNA(Sec) to selenocysteinyl-tRNA(Sec) required for selenoprotein biosynthesis. The protein is L-seryl-tRNA(Sec) selenium transferase of Salmonella enteritidis PT4 (strain P125109).